A 249-amino-acid chain; its full sequence is Kallikrein-7 (249 aa).

The first 21 residues, 1 to 21 (MGVWLLSLITVLLSLALETAG), serve as a signal peptide directing secretion. The propeptide at 22–25 (QGER) is activation peptide. The segment at 26-246 (IIDGYKCKEG…YKRWVMETMK (221 aa)) is serine protease. Disulfide bonds link cysteine 32–cysteine 161, cysteine 51–cysteine 67, cysteine 133–cysteine 235, cysteine 140–cysteine 207, cysteine 172–cysteine 186, and cysteine 197–cysteine 222. Catalysis depends on charge relay system residues histidine 66 and aspartate 108. Serine 201 acts as the Charge relay system in catalysis.

It belongs to the peptidase S1 family. Kallikrein subfamily. In terms of tissue distribution, expressed in skin and, at lower levels, in lung, kidney, brain, heart and spleen. In skin, expressed in high suprabasal keratinocytes and in the luminal parts of hair follicles. Not detected in liver and skeletal muscle.

It localises to the secreted. It catalyses the reaction Cleavage of proteins with aromatic side chains in the P1 position.. With respect to regulation, inhibited by Zn2+ and Cu2+ at low micromolar concentrations. Inhibited by SERPINA12. May catalyze the degradation of intercellular cohesive structures in the cornified layer of the skin in the continuous shedding of cells from the skin surface. Specific for amino acid residues with aromatic side chains in the P1 position. Cleaves insulin A chain at '14-Tyr-|-Gln-15' and insulin B chain at '6-Leu-|-Cys-7', '16-Tyr-|-Leu-17', '25-Phe-|-Tyr-26' and '26-Tyr-|-Thr-27'. Could play a role in the activation of precursors to inflammatory cytokines. This is Kallikrein-7 (Klk7) from Mus musculus (Mouse).